We begin with the raw amino-acid sequence, 436 residues long: GTPase Der (436 aa).

2 EngA-type G domains span residues 4 to 167 (PIVA…GEEE) and 176 to 351 (IRLS…ENHK). GTP contacts are provided by residues 10-17 (GRPNVGKS), 57-61 (DTGGI), 119-122 (NKVD), 182-189 (GRPNVGKS), 229-233 (DTAGM), and 294-297 (NKWD). The region spanning 352–436 (KRVQSSTLNE…PIHIIARKRN (85 aa)) is the KH-like domain.

This sequence belongs to the TRAFAC class TrmE-Era-EngA-EngB-Septin-like GTPase superfamily. EngA (Der) GTPase family. As to quaternary structure, associates with the 50S ribosomal subunit.

In terms of biological role, GTPase that plays an essential role in the late steps of ribosome biogenesis. The polypeptide is GTPase Der (Staphylococcus aureus (strain USA300)).